The primary structure comprises 850 residues: Elongation factor 2 (850 aa).

Residues 17 to 351 (KNIRNISVIA…QIALKLPSPL (335 aa)) enclose the tr-type G domain. GTP-binding positions include 26 to 33 (AHVDHGKS), 159 to 162 (NKLD), and 213 to 215 (SGL). Diphthamide is present on His-707.

It belongs to the TRAFAC class translation factor GTPase superfamily. Classic translation factor GTPase family. EF-G/EF-2 subfamily.

It is found in the cytoplasm. It catalyses the reaction GTP + H2O = GDP + phosphate + H(+). Its pathway is protein biosynthesis; polypeptide chain elongation. In terms of biological role, catalyzes the GTP-dependent ribosomal translocation step during translation elongation. During this step, the ribosome changes from the pre-translocational (PRE) to the post-translocational (POST) state as the newly formed A-site-bound peptidyl-tRNA and P-site-bound deacylated tRNA move to the P and E sites, respectively. Catalyzes the coordinated movement of the two tRNA molecules, the mRNA and conformational changes in the ribosome. This Encephalitozoon cuniculi (strain GB-M1) (Microsporidian parasite) protein is Elongation factor 2 (EFT1).